Reading from the N-terminus, the 226-residue chain is MAKKKAFTSLPYLASIVFLPWWISLSFNKWLESWVTNWWNTRQSETFLNDIQEKNILEKFIELEELFLLDEMIKEYPETHIQRRIHKETIQLVKMHNESHIHTILHLSTNIICFAILSGYSILGNEGLFILNSWVQEFLYNLSDTIKAFSILLLTDLCIGFHSPHGWELMIGSVYKDFGFAHNDQIISGLVSTFPVILDTILKYWIFRYLNRVSPSLVVIYHSMND.

3 helical membrane passes run 7–27, 111–131, and 186–206; these read FTSL…SLSF, IICF…LFIL, and IISG…KYWI.

The protein belongs to the CemA family.

It localises to the plastid. The protein resides in the chloroplast inner membrane. The enzyme catalyses K(+)(in) + H(+)(out) = K(+)(out) + H(+)(in). Its function is as follows. Contributes to K(+)/H(+) antiport activity by supporting proton efflux to control proton extrusion and homeostasis in chloroplasts in a light-dependent manner to modulate photosynthesis. Prevents excessive induction of non-photochemical quenching (NPQ) under continuous-light conditions. Indirectly promotes efficient inorganic carbon uptake into chloroplasts. The chain is Potassium/proton antiporter CemA from Buxus microphylla (Littleleaf boxwood).